The primary structure comprises 123 residues: Large ribosomal subunit protein bL12 (123 aa).

This sequence belongs to the bacterial ribosomal protein bL12 family. As to quaternary structure, homodimer. Part of the ribosomal stalk of the 50S ribosomal subunit. Forms a multimeric L10(L12)X complex, where L10 forms an elongated spine to which 2 to 4 L12 dimers bind in a sequential fashion. Binds GTP-bound translation factors.

In terms of biological role, forms part of the ribosomal stalk which helps the ribosome interact with GTP-bound translation factors. Is thus essential for accurate translation. The chain is Large ribosomal subunit protein bL12 from Bartonella henselae (strain ATCC 49882 / DSM 28221 / CCUG 30454 / Houston 1) (Rochalimaea henselae).